Consider the following 173-residue polypeptide: Alpha-crystallin A chain (173 aa).

Met1 is modified (N-acetylmethionine). The interval Met1–Glu63 is required for complex formation with BFSP1 and BFSP2. A Deamidated glutamine; partial modification is found at Gln6. Residue Ser45 is modified to Phosphoserine. Gln50 is subject to Deamidated glutamine; partial. Positions Leu52–Ser162 constitute a sHSP domain. Lys70 bears the N6-acetyllysine mark. Deamidated glutamine; partial is present on Gln90. N6-acetyllysine is present on Lys99. His100 contacts Zn(2+). The residue at position 101 (Asn101) is a Deamidated asparagine; partial. Residues Glu102 and His107 each coordinate Zn(2+). A Phosphoserine modification is found at Ser122. Asn123 carries the post-translational modification Deamidated asparagine; partial. Residues Pro144–Ser173 form a disordered region. The residue at position 147 (Gln147) is a Deamidated glutamine; partial. Over residues Gly153–Pro167 the composition is skewed to basic and acidic residues. His154 lines the Zn(2+) pocket. An O-linked (GlcNAc) serine glycan is attached at Ser162.

Belongs to the small heat shock protein (HSP20) family. In terms of assembly, heteromer composed of three CRYAA and one CRYAB subunits. Inter-subunit bridging via zinc ions enhances stability, which is crucial as there is no protein turn over in the lens. Can also form homodimers and homotetramers (dimers of dimers) which serve as the building blocks of homooligomers. Within homooligomers, the zinc-binding motif is created from residues of 3 different molecules. His-100 and Glu-102 from one molecule are ligands of the zinc ion, and His-107 and His-154 residues from additional molecules complete the site with tetrahedral coordination geometry. Part of a complex required for lens intermediate filament formation composed of BFSP1, BFSP2 and CRYAA. In terms of processing, acetylation at Lys-70 may increase chaperone activity. Post-translationally, undergoes age-dependent proteolytical cleavage at the C-terminus.

The protein resides in the cytoplasm. It localises to the nucleus. Its function is as follows. Contributes to the transparency and refractive index of the lens. Acts as a chaperone, preventing aggregation of various proteins under a wide range of stress conditions. Required for the correct formation of lens intermediate filaments as part of a complex composed of BFSP1, BFSP2 and CRYAA. This Otolemur crassicaudatus (Brown greater galago) protein is Alpha-crystallin A chain (CRYAA).